A 309-amino-acid polypeptide reads, in one-letter code: Probable 5-dehydro-4-deoxyglucarate dehydratase (309 aa).

This sequence belongs to the DapA family.

The enzyme catalyses 5-dehydro-4-deoxy-D-glucarate + H(+) = 2,5-dioxopentanoate + CO2 + H2O. The protein operates within carbohydrate acid metabolism; D-glucarate degradation; 2,5-dioxopentanoate from D-glucarate: step 2/2. The chain is Probable 5-dehydro-4-deoxyglucarate dehydratase from Saccharopolyspora erythraea (strain ATCC 11635 / DSM 40517 / JCM 4748 / NBRC 13426 / NCIMB 8594 / NRRL 2338).